Here is a 165-residue protein sequence, read N- to C-terminus: MKSILRSTTRNLITSSRRFENLKTTEEIRNFLAESTWSINELLKSPTGSSQPEVSPEIVKKMLKLSGLNDLKDDQSVTKALNLQMMFINHLYDNDHETVTPSPKRNENNGIFRLLASDHLPQRPLELNDLLKQINELKPDPSKGEVDFTISDLQRDSFVINKRKE.

The N-terminal 19 residues, 1 to 19 (MKSILRSTTRNLITSSRRF), are a transit peptide targeting the mitochondrion.

This sequence belongs to the GatF family. As to quaternary structure, subunit of the heterotrimeric GatFAB amidotransferase (AdT) complex, composed of A, B and F subunits.

The protein localises to the mitochondrion inner membrane. It carries out the reaction L-glutamyl-tRNA(Gln) + L-glutamine + ATP + H2O = L-glutaminyl-tRNA(Gln) + L-glutamate + ADP + phosphate + H(+). Its function is as follows. Allows the formation of correctly charged Gln-tRNA(Gln) through the transamidation of misacylated Glu-tRNA(Gln) in the mitochondria. The reaction takes place in the presence of glutamine and ATP through an activated gamma-phospho-Glu-tRNA(Gln). Required for proper protein synthesis within the mitochondrion. The protein is Glutamyl-tRNA(Gln) amidotransferase subunit F, mitochondrial of Candida albicans (strain WO-1) (Yeast).